A 440-amino-acid polypeptide reads, in one-letter code: Xylose isomerase (440 aa).

Residues His100 and Asp103 contribute to the active site. 7 residues coordinate Mg(2+): Glu231, Glu267, His270, Asp295, Asp306, Asp308, and Asp338.

It belongs to the xylose isomerase family. As to quaternary structure, homotetramer. Requires Mg(2+) as cofactor.

The protein resides in the cytoplasm. The catalysed reaction is alpha-D-xylose = alpha-D-xylulofuranose. The protein is Xylose isomerase of Burkholderia vietnamiensis (strain G4 / LMG 22486) (Burkholderia cepacia (strain R1808)).